The following is a 258-amino-acid chain: Type III pantothenate kinase (258 aa).

Residue 6 to 13 (DVGNTQIF) coordinates ATP. 107–110 (GADR) lines the substrate pocket. The active-site Proton acceptor is Asp109. Asp130 serves as a coordination point for K(+). ATP is bound at residue Thr133. Thr185 provides a ligand contact to substrate.

It belongs to the type III pantothenate kinase family. As to quaternary structure, homodimer. NH4(+) is required as a cofactor. Requires K(+) as cofactor.

It is found in the cytoplasm. It carries out the reaction (R)-pantothenate + ATP = (R)-4'-phosphopantothenate + ADP + H(+). It participates in cofactor biosynthesis; coenzyme A biosynthesis; CoA from (R)-pantothenate: step 1/5. Its function is as follows. Catalyzes the phosphorylation of pantothenate (Pan), the first step in CoA biosynthesis. This chain is Type III pantothenate kinase, found in Elusimicrobium minutum (strain Pei191).